The chain runs to 421 residues: Serine hydroxymethyltransferase (421 aa).

(6S)-5,6,7,8-tetrahydrofolate is bound by residues Leu-121 and 125–127 (GHL). N6-(pyridoxal phosphate)lysine is present on Lys-230. (6S)-5,6,7,8-tetrahydrofolate-binding positions include Glu-246 and 354 to 356 (SPF).

It belongs to the SHMT family. As to quaternary structure, homodimer. It depends on pyridoxal 5'-phosphate as a cofactor.

It localises to the cytoplasm. The catalysed reaction is (6R)-5,10-methylene-5,6,7,8-tetrahydrofolate + glycine + H2O = (6S)-5,6,7,8-tetrahydrofolate + L-serine. It participates in one-carbon metabolism; tetrahydrofolate interconversion. Its pathway is amino-acid biosynthesis; glycine biosynthesis; glycine from L-serine: step 1/1. Catalyzes the reversible interconversion of serine and glycine with tetrahydrofolate (THF) serving as the one-carbon carrier. This reaction serves as the major source of one-carbon groups required for the biosynthesis of purines, thymidylate, methionine, and other important biomolecules. Also exhibits THF-independent aldolase activity toward beta-hydroxyamino acids, producing glycine and aldehydes, via a retro-aldol mechanism. This Rickettsia felis (strain ATCC VR-1525 / URRWXCal2) (Rickettsia azadi) protein is Serine hydroxymethyltransferase.